The chain runs to 56 residues: Arcadin-3 (56 aa).

It is found in the cytoplasm. It localises to the cytoskeleton. Its function is as follows. Part of an actin-like archaeal cytoskeleton. This chain is Arcadin-3, found in Pyrobaculum calidifontis (strain DSM 21063 / JCM 11548 / VA1).